A 352-amino-acid polypeptide reads, in one-letter code: Histidinol-phosphate aminotransferase (352 aa).

At K221 the chain carries N6-(pyridoxal phosphate)lysine.

This sequence belongs to the class-II pyridoxal-phosphate-dependent aminotransferase family. Histidinol-phosphate aminotransferase subfamily. In terms of assembly, homodimer. Requires pyridoxal 5'-phosphate as cofactor.

It carries out the reaction L-histidinol phosphate + 2-oxoglutarate = 3-(imidazol-4-yl)-2-oxopropyl phosphate + L-glutamate. Its pathway is amino-acid biosynthesis; L-histidine biosynthesis; L-histidine from 5-phospho-alpha-D-ribose 1-diphosphate: step 7/9. This chain is Histidinol-phosphate aminotransferase, found in Staphylococcus aureus (strain MSSA476).